We begin with the raw amino-acid sequence, 720 residues long: Cyclopenase penL (720 aa).

Cu cation-binding residues include histidine 137, histidine 141, and histidine 313.

The protein belongs to the tyrosinase family. Requires Cu(2+) as cofactor.

It catalyses the reaction (-)-cyclopenine = viridicatin + methyl isocyanate + H(+). The catalysed reaction is (-)-4'-methoxycyclopenine = 4'-methoxyviridicatin + methyl isocyanate + H(+). Its pathway is secondary metabolite biosynthesis. The protein operates within alkaloid biosynthesis. It functions in the pathway mycotoxin biosynthesis. In terms of biological role, cyclopenase; part of the gene cluster that mediates the biosynthesis of penigequinolones, potent insecticidal alkaloids that contain a highly modified 10-carbon prenyl group. The first stage is catalyzed by the nonribosomal peptide synthetase penN that condenses anthranilic acid and O-methyl-L-tyrosine to produce 4'-methoxycyclopeptin. 4'-methoxycyclopeptin is then converted to 4'-methoxydehydrocyclopeptin by the ketoglutarate-dependent dioxygenase penM through dehydrogenation to form a double bond between C-alpha and C-beta of the O-methyltyrosine side chain. PenM also converts its first product methoxydehydrocyclopeptin to 4'-methoxycyclopenin. The following conversion of 4'methoxycyclopenin into 4'-methoxyviridicatin is catalyzed by the cyclopenase penL. 4'-methoxyviridicatin is the precursor of quinolone natural products, and is further converted to quinolinone B. The prenyltransferase penI then catalyzes the canonical Friedel-Crafts alkylation of quinolinone B with dimethylallyl cation to yield dimethylallyl quinolone, which is subjected to FAD-dependent dehydrogenation by the FAD-linked oxidoreductase penH to yield conjugated aryl diene. The delta(3') double bond then serves as the site of the second alkylation with DMAPP catalyzed by the prenyltransferase penG to yield a carbenium ion intermediate, which can be attacked by H(2)O to yield a styrenyl quinolone containing a C3'-hydroxyprenyl chain, or undergo cyclization to yield yaequinolones J1 and J2. The conversion of the styrenyl quinolone into the tetrahydrofuran-containing yaequinolone C is performed by the FAD-dependent monooxygenase penE and involves epoxidation of the terminal C7'-C8' olefin, followed by epoxide ring opening initiated by the C3' hydroxyl group. The predicted cysteine hydrolase penJ acts as an epoxide hydrolase that enhances the rate of the 5-exo-tet cyclization step, increasing the yield of yaequinolone C. PenF catalyzes the cationic rearrangement of the epoxide formed by penE (before ring opening to produce yaequinolone C) into yaequinolone D. Finally, the short-chain dehydrogenase/reductase (SDR)-like reductase penD, catalyzes both the dehydration of yaequinolone D and the reduction of the resulting oxonium to yield penigequinolone. The chain is Cyclopenase penL from Penicillium thymicola.